Reading from the N-terminus, the 302-residue chain is MELRHLQYFIAVAEELHFGKAARRLNMTQPPLSQQIKQLEEEVGVTLLKRTKRFVELTAAGEIFLNHCRMALMQIGQGIELAQRTARGEQGLLVIGFVGSATYEFLPPIVREYRKKFPSVKIELREISSSRQQEELLKGNIDIGILHPPLQHTALHIETAQSSPCVLALPKQHPLTSKESITIEDLRDEPIITVAKEAWPTLYMDFIQFCEQAGFRPNIVQEATEYQMVIGLVSAGIGMTFVPSSAKKLFNLDVTYRKMDQIQLNAEWVIAYRKDNHNPLIKHFIHISNCQQTRTKESDAGT.

In terms of domain architecture, HTH lysR-type spans 1 to 58 (MELRHLQYFIAVAEELHFGKAARRLNMTQPPLSQQIKQLEEEVGVTLLKRTKRFVELT). Positions 18-37 (FGKAARRLNMTQPPLSQQIK) form a DNA-binding region, H-T-H motif.

Belongs to the LysR transcriptional regulatory family.

Regulates the expression of the alsSD operon for acetoin biosynthesis. This Bacillus subtilis (strain 168) protein is HTH-type transcriptional regulator AlsR (alsR).